A 535-amino-acid polypeptide reads, in one-letter code: CTP synthase (535 aa).

Residues 1–267 (MTKYIFVTGG…DQIVLDHFGV (267 aa)) are amidoligase domain. CTP is bound at residue S13. S13 serves as a coordination point for UTP. 14 to 19 (SLGKGI) is a binding site for ATP. Residue Y54 participates in L-glutamine binding. D71 contributes to the ATP binding site. Mg(2+) is bound by residues D71 and E141. Residues 148 to 150 (DIE), 188 to 193 (KTKPTQ), and K224 contribute to the CTP site. UTP contacts are provided by residues 188 to 193 (KTKPTQ) and K224. One can recognise a Glutamine amidotransferase type-1 domain in the interval 292–535 (KIALVGKYVA…VAAASREVKD (244 aa)). An L-glutamine-binding site is contributed by G354. C381 serves as the catalytic Nucleophile; for glutamine hydrolysis. Residues 382-385 (LGMQ), E405, and R463 each bind L-glutamine. Active-site residues include H508 and E510.

Belongs to the CTP synthase family. Homotetramer.

The enzyme catalyses UTP + L-glutamine + ATP + H2O = CTP + L-glutamate + ADP + phosphate + 2 H(+). It carries out the reaction L-glutamine + H2O = L-glutamate + NH4(+). It catalyses the reaction UTP + NH4(+) + ATP = CTP + ADP + phosphate + 2 H(+). The protein operates within pyrimidine metabolism; CTP biosynthesis via de novo pathway; CTP from UDP: step 2/2. Allosterically activated by GTP, when glutamine is the substrate; GTP has no effect on the reaction when ammonia is the substrate. The allosteric effector GTP functions by stabilizing the protein conformation that binds the tetrahedral intermediate(s) formed during glutamine hydrolysis. Inhibited by the product CTP, via allosteric rather than competitive inhibition. Catalyzes the ATP-dependent amination of UTP to CTP with either L-glutamine or ammonia as the source of nitrogen. Regulates intracellular CTP levels through interactions with the four ribonucleotide triphosphates. This Levilactobacillus brevis (strain ATCC 367 / BCRC 12310 / CIP 105137 / JCM 1170 / LMG 11437 / NCIMB 947 / NCTC 947) (Lactobacillus brevis) protein is CTP synthase.